The following is a 123-amino-acid chain: Small ribosomal subunit protein uS12c (123 aa).

The disordered stretch occupies residues 103–123; that stretch reads AAGVKNRKQSRSKYGAKKPKE. Positions 107-123 are enriched in basic residues; that stretch reads KNRKQSRSKYGAKKPKE.

This sequence belongs to the universal ribosomal protein uS12 family. Part of the 30S ribosomal subunit.

The protein localises to the plastid. It is found in the chloroplast. With S4 and S5 plays an important role in translational accuracy. Located at the interface of the 30S and 50S subunits. This Guillardia theta (Cryptophyte) protein is Small ribosomal subunit protein uS12c (rps12).